Reading from the N-terminus, the 421-residue chain is Histidine--tRNA ligase (421 aa).

It belongs to the class-II aminoacyl-tRNA synthetase family. Homodimer.

It localises to the cytoplasm. The catalysed reaction is tRNA(His) + L-histidine + ATP = L-histidyl-tRNA(His) + AMP + diphosphate + H(+). This chain is Histidine--tRNA ligase, found in Alkaliphilus oremlandii (strain OhILAs) (Clostridium oremlandii (strain OhILAs)).